The chain runs to 247 residues: Protein ABHD14A (247 aa).

Residues 11–31 (AALLGLGLLLVFLLYMGLPGP) traverse the membrane as a helical; Signal-anchor for type II membrane protein segment. The N-linked (GlcNAc...) asparagine glycan is linked to Asn43. Catalysis depends on charge relay system residues Ser147, Asp198, and His225.

The protein belongs to the AB hydrolase superfamily. ABHD14 family. Widely expressed. Higher expression is detected in brain, kidney, heart, testis, ovary and uterus.

It is found in the cytoplasm. The protein resides in the membrane. In terms of biological role, possible role in granule neuron development. The chain is Protein ABHD14A from Mus musculus (Mouse).